The following is a 1026-amino-acid chain: mRNA transport homolog 4 (1026 aa).

The Helicase ATP-binding domain maps to 134 to 290 (ILCIDNNQSV…WVASIKQQPV (157 aa)). An ATP-binding site is contributed by 147-154 (AHTSAGKT). Residues 238-241 (DEIH) carry the DEIH box motif. In terms of domain architecture, Helicase C-terminal spans 360 to 564 (NVLKIIRSVA…NMVLNLMRVE (205 aa)).

The protein belongs to the helicase family. SKI2 subfamily.

The protein localises to the nucleus. In Caenorhabditis elegans, this protein is mRNA transport homolog 4 (mtr-4).